The primary structure comprises 216 residues: Octanoyltransferase (216 aa).

The BPL/LPL catalytic domain maps to 24–212 (KFRKECILFL…NLCSFLEPIN (189 aa)). Substrate-binding positions include 69–76 (RGGDFTAH), 140–142 (SIG), and 153–155 (GIA). Cysteine 171 (acyl-thioester intermediate) is an active-site residue.

It belongs to the LipB family.

It localises to the cytoplasm. It catalyses the reaction octanoyl-[ACP] + L-lysyl-[protein] = N(6)-octanoyl-L-lysyl-[protein] + holo-[ACP] + H(+). Its pathway is protein modification; protein lipoylation via endogenous pathway; protein N(6)-(lipoyl)lysine from octanoyl-[acyl-carrier-protein]: step 1/2. Catalyzes the transfer of endogenously produced octanoic acid from octanoyl-acyl-carrier-protein onto the lipoyl domains of lipoate-dependent enzymes. Lipoyl-ACP can also act as a substrate although octanoyl-ACP is likely to be the physiological substrate. The protein is Octanoyltransferase of Leptospira interrogans serogroup Icterohaemorrhagiae serovar Lai (strain 56601).